Consider the following 788-residue polypeptide: Endonuclease MutS2 (788 aa).

Residue 332 to 339 (GPNTGGKT) participates in ATP binding. Positions 713-788 (IDLRGLDSEE…GTGVTVVELK (76 aa)) constitute a Smr domain.

Belongs to the DNA mismatch repair MutS family. MutS2 subfamily. As to quaternary structure, homodimer. Binds to stalled ribosomes, contacting rRNA.

Endonuclease that is involved in the suppression of homologous recombination and thus may have a key role in the control of bacterial genetic diversity. Functionally, acts as a ribosome collision sensor, splitting the ribosome into its 2 subunits. Detects stalled/collided 70S ribosomes which it binds and splits by an ATP-hydrolysis driven conformational change. Acts upstream of the ribosome quality control system (RQC), a ribosome-associated complex that mediates the extraction of incompletely synthesized nascent chains from stalled ribosomes and their subsequent degradation. Probably generates substrates for RQC. In Clostridium acetobutylicum (strain ATCC 824 / DSM 792 / JCM 1419 / IAM 19013 / LMG 5710 / NBRC 13948 / NRRL B-527 / VKM B-1787 / 2291 / W), this protein is Endonuclease MutS2.